Consider the following 402-residue polypeptide: Flavohemoprotein (402 aa).

Residues 1–138 (MLSPEVRALV…LADLLIGRER (138 aa)) form the Globin domain. His85 contacts heme b. Catalysis depends on charge relay system residues Tyr95 and Glu137. Residues 149–402 (GGWTGWRAFK…AEVFGTGGVA (254 aa)) are reductase. The region spanning 152–261 (TGWRAFKVVR…SPPQGDFTLD (110 aa)) is the FAD-binding FR-type domain. FAD is bound by residues Tyr190 and 206-209 (RQYS). Position 274–279 (274–279 (GVGLTP)) interacts with NADP(+). 395–398 (VFGT) lines the FAD pocket.

Belongs to the globin family. Two-domain flavohemoproteins subfamily. This sequence in the C-terminal section; belongs to the flavoprotein pyridine nucleotide cytochrome reductase family. Heme b is required as a cofactor. Requires FAD as cofactor.

It carries out the reaction 2 nitric oxide + NADPH + 2 O2 = 2 nitrate + NADP(+) + H(+). It catalyses the reaction 2 nitric oxide + NADH + 2 O2 = 2 nitrate + NAD(+) + H(+). Its function is as follows. Is involved in NO detoxification in an aerobic process, termed nitric oxide dioxygenase (NOD) reaction that utilizes O(2) and NAD(P)H to convert NO to nitrate, which protects the bacterium from various noxious nitrogen compounds. Therefore, plays a central role in the inducible response to nitrosative stress. The protein is Flavohemoprotein of Bordetella pertussis (strain Tohama I / ATCC BAA-589 / NCTC 13251).